The chain runs to 366 residues: Envelope glycoprotein M (366 aa).

At 1 to 17 (MMKASRSDTFMLRTWIQ) the chain is on the intravirion side. The chain crosses the membrane as a helical span at residues 18 to 38 (LLVLFVIMFIMSAILPIAASV). Residues 39–83 (EGLGFPCYFPNLVDYSLLNLTLRNAAKHLTPTLFLEAPELFVYIT) are Virion surface-facing. The chain crosses the membrane as a helical span at residues 84–104 (WSVLVDLASAIYYVVGALAIL). The Intravirion portion of the chain corresponds to 105-113 (QARKTHLTS). The helical transmembrane segment at 114-134 (MITLQTWINLVGSHTMLFIGI) threads the bilayer. Topologically, residues 135–153 (ARMWTLQLFIHVLSYKHVM) are virion surface. Residues 154 to 174 (LAAFIYFLHFCLSYMHTLSLV) form a helical membrane-spanning segment. Over 175–209 (SRNSPKWSVLLMEQHIPKQSLLSTILDYGKPLCVN) the chain is Intravirion. Residues 210–230 (MYLSLLALEMLVFSLGFMMAI) form a helical membrane-spanning segment. Residues 231–235 (GNSFY) lie on the Virion surface side of the membrane. A helical membrane pass occupies residues 236 to 256 (ILVSDTVLASINLYFVLTTFW). Over 257-269 (YMMTEMFLQDYLK) the chain is Intravirion. Residues 270–290 (LQFGFYLGVFSGSLILLLPVL) traverse the membrane as a helical segment. The Virion surface portion of the chain corresponds to 291–304 (RYEAVFVSANLHKT). Residues 305 to 325 (VAVNIAMIPAMCVIAMMFRLF) traverse the membrane as a helical segment. Residues 326–366 (RYSQQVRKPENSYTPLPKRFKKRRQKQDQQLIMVETSDEEL) are Intravirion-facing.

It belongs to the herpesviridae glycoprotein M family. As to quaternary structure, interacts (via N-terminus) with gN (via N-terminus). The gM-gN heterodimer forms the gCII complex.

Its subcellular location is the virion membrane. It is found in the host Golgi apparatus. It localises to the host trans-Golgi network. The protein localises to the host endosome membrane. The protein resides in the host nucleus inner membrane. Its function is as follows. Envelope glycoprotein important for virion assembly and egress. Plays a role in the correct incorporation of gH-gL into virion membrane. Directs the glycoprotein N (gN) to the host trans-Golgi network. In Saimiri sciureus (Common squirrel monkey), this protein is Envelope glycoprotein M.